Here is an 827-residue protein sequence, read N- to C-terminus: Polyhomeotic-like protein 2 (827 aa).

Disordered stretches follow at residues Met1–Gln78, Gly282–Thr316, and Gln482–Ala545. Over residues Ser9 to Ser38 the composition is skewed to low complexity. The segment covering Thr485–Val498 has biased composition (basic and acidic residues). The segment covering Ala517–Glu538 has biased composition (polar residues). Positions Lys540–Val570 match the HD1 motif. Residues Asn609–Lys643 form an FCS-type zinc finger. 4 residues coordinate Zn(2+): Cys618, Cys621, Cys637, and Cys641. The segment at Met653–Ser730 is disordered. Over residues Ser661–Pro675 the composition is skewed to basic and acidic residues. 2 stretches are compositionally biased toward polar residues: residues Pro687–Ser696 and Gly708–Ser717. The SAM domain maps to Trp763–Ser827.

As to quaternary structure, component of a PRC1-like complex. Isoform 1 expression is stronger at the posterior border than in the anterior region within individual somites; On the contrary, isoform 2 expression is higher at the posterior border.

It is found in the nucleus. Component of a Polycomb group (PcG) multiprotein PRC1-like complex, a complex class required to maintain the transcriptionally repressive state of many genes, including Hox genes, throughout development. PcG PRC1 complex acts via chromatin remodeling and modification of histones; it mediates monoubiquitination of histone H2A 'Lys-119', rendering chromatin heritably changed in its expressibility. This Danio rerio (Zebrafish) protein is Polyhomeotic-like protein 2 (phc2).